A 115-amino-acid chain; its full sequence is Large ribosomal subunit protein bL19 (115 aa).

It belongs to the bacterial ribosomal protein bL19 family.

In terms of biological role, this protein is located at the 30S-50S ribosomal subunit interface and may play a role in the structure and function of the aminoacyl-tRNA binding site. In Streptococcus equi subsp. zooepidemicus (strain H70), this protein is Large ribosomal subunit protein bL19.